The primary structure comprises 515 residues: Protein translocase subunit SecD (515 aa).

A run of 6 helical transmembrane segments spans residues 5–25 (LIAK…LATP), 353–373 (KGIL…VAYY), 375–395 (LSGL…MGLL), 398–418 (FGAT…GIAV), 450–470 (FSTI…LFQF), and 477–497 (GFAV…ILCT).

It belongs to the SecD/SecF family. SecD subfamily. Forms a complex with SecF. Part of the essential Sec protein translocation apparatus which comprises SecA, SecYEG and auxiliary proteins SecDF. Other proteins may also be involved.

It localises to the cell inner membrane. In terms of biological role, part of the Sec protein translocase complex. Interacts with the SecYEG preprotein conducting channel. SecDF uses the proton motive force (PMF) to complete protein translocation after the ATP-dependent function of SecA. This is Protein translocase subunit SecD from Desulfurispirillum indicum (strain ATCC BAA-1389 / DSM 22839 / S5).